We begin with the raw amino-acid sequence, 140 residues long: Large ribosomal subunit protein uL11 (140 aa).

The protein belongs to the universal ribosomal protein uL11 family. In terms of assembly, part of the ribosomal stalk of the 50S ribosomal subunit. Interacts with L10 and the large rRNA to form the base of the stalk. L10 forms an elongated spine to which L12 dimers bind in a sequential fashion forming a multimeric L10(L12)X complex. Post-translationally, one or more lysine residues are methylated.

Forms part of the ribosomal stalk which helps the ribosome interact with GTP-bound translation factors. This chain is Large ribosomal subunit protein uL11, found in Solidesulfovibrio magneticus (strain ATCC 700980 / DSM 13731 / RS-1) (Desulfovibrio magneticus).